A 365-amino-acid polypeptide reads, in one-letter code: Heme A synthase (365 aa).

The next 8 membrane-spanning stretches (helical) occupy residues 17–37, 107–127, 132–152, 164–184, 203–223, 264–283, 296–316, and 320–340; these read AVRIWLTVVAALIAVMVLVGG, VIGIAYLLPFLWFLWRGAIGP, ALWGIFALGALQGAVGWWMVA, VRLAVHLTLALIIYAAIVWTL, AIALLALTLLQLFLGALVAGL, QFDHRMMAYALWALAAWHAI, GALWLFAALSLQAVLGILTVL, and PIGLALAHQAVGIVVLTLAVL. His267 contacts heme. His327 lines the heme pocket.

The protein belongs to the COX15/CtaA family. Type 2 subfamily. In terms of assembly, interacts with CtaB. It depends on heme b as a cofactor.

The protein localises to the cell membrane. It carries out the reaction Fe(II)-heme o + 2 A + H2O = Fe(II)-heme a + 2 AH2. It functions in the pathway porphyrin-containing compound metabolism; heme A biosynthesis; heme A from heme O: step 1/1. In terms of biological role, catalyzes the conversion of heme O to heme A by two successive hydroxylations of the methyl group at C8. The first hydroxylation forms heme I, the second hydroxylation results in an unstable dihydroxymethyl group, which spontaneously dehydrates, resulting in the formyl group of heme A. In Rhodopseudomonas palustris (strain HaA2), this protein is Heme A synthase.